The following is a 204-amino-acid chain: Cytochrome bo(3) ubiquinol oxidase subunit 3 (204 aa).

Residues 1 to 31 are Cytoplasmic-facing; that stretch reads MATDTLTHATAHAHEHGHHDAGGTKIFGFWI. A helical transmembrane segment spans residues 32–50; the sequence is YLMSDCILFSILFATYAVL. Over 51-66 the chain is Periplasmic; that stretch reads VNGTAGGPTGKDIFEL. Residues 67 to 85 traverse the membrane as a helical segment; the sequence is PFVLVETFLLLFSSITYGM. Residues 86–101 lie on the Cytoplasmic side of the membrane; it reads AAIAMYKNNKSQVISW. The helical transmembrane segment at 102 to 120 threads the bilayer; the sequence is LALTWLFGAGFIGMEIYEF. Topologically, residues 121 to 142 are periplasmic; it reads HHLIVNGMGPDRSGFLSAFFAL. The helical transmembrane segment at 143–161 threads the bilayer; sequence VGTHGLHVTSGLIWMAVLM. Residues 162 to 184 lie on the Cytoplasmic side of the membrane; that stretch reads VQIARRGLTSTNRTRIMCLSLFW. A helical membrane pass occupies residues 185 to 203; that stretch reads HFLDVVWICVFTVVYLMGA. A topological domain (periplasmic) is located at residue methionine 204.

It belongs to the cytochrome c oxidase subunit 3 family. In terms of assembly, heterooctamer of two A chains, two B chains, two C chains and two D chains.

The protein localises to the cell inner membrane. Functionally, cytochrome bo(3) ubiquinol terminal oxidase is the component of the aerobic respiratory chain of E.coli that predominates when cells are grown at high aeration. Has proton pump activity across the membrane in addition to electron transfer, pumping 2 protons/electron. The chain is Cytochrome bo(3) ubiquinol oxidase subunit 3 (cyoC) from Escherichia coli O6:H1 (strain CFT073 / ATCC 700928 / UPEC).